The chain runs to 366 residues: Flagellar P-ring protein (366 aa).

Positions 1-19 (MTLIRLLACLLFLPCLAQA) are cleaved as a signal peptide.

Belongs to the FlgI family. The basal body constitutes a major portion of the flagellar organelle and consists of four rings (L,P,S, and M) mounted on a central rod.

The protein localises to the periplasm. It is found in the bacterial flagellum basal body. Its function is as follows. Assembles around the rod to form the L-ring and probably protects the motor/basal body from shearing forces during rotation. The polypeptide is Flagellar P-ring protein (Ruegeria pomeroyi (strain ATCC 700808 / DSM 15171 / DSS-3) (Silicibacter pomeroyi)).